Here is a 120-residue protein sequence, read N- to C-terminus: Large ribosomal subunit protein eL18 (120 aa).

The protein belongs to the eukaryotic ribosomal protein eL18 family. As to quaternary structure, part of the 50S ribosomal subunit.

This chain is Large ribosomal subunit protein eL18, found in Pyrococcus furiosus (strain ATCC 43587 / DSM 3638 / JCM 8422 / Vc1).